An 888-amino-acid chain; its full sequence is Serine/threonine-protein phosphatase 1 regulatory subunit 10 (888 aa).

Positions 1–348 (MGSGPIDPKE…EPAPPAEPMD (348 aa)) are interaction with TOX4. Residues 73–147 (KLLNNWLTYS…SDWMAVIRSQ (75 aa)) enclose the TFIIS N-terminal domain. 4 disordered regions span residues 147–213 (QSST…STGL), 247–270 (SATA…NTAP), 306–400 (KKKK…KTVT), and 534–853 (VETL…HGGD). Composition is skewed to basic and acidic residues over residues 153-166 (AEKD…EGKS) and 174-196 (PLTE…EKPK). K179 is covalently cross-linked (Glycyl lysine isopeptide (Lys-Gly) (interchain with G-Cter in SUMO2)). Positions 248–258 (ATAAPGDAAPP) are enriched in low complexity. A Glycyl lysine isopeptide (Lys-Gly) (interchain with G-Cter in SUMO2) cross-link involves residue K262. A Phosphoserine modification is found at S313. The segment covering 325-334 (KTSTEQSTAK) has biased composition (polar residues). S382 carries the post-translational modification Phosphoserine. The interval 388 to 417 (QLTRKGRKRKTVTWPEEGKLREYFYFELDE) is necessary for interaction with PPP1CA. Positions 393 to 408 (GRKRKTVTWPEEGKLR) are necessary for interaction with PPP1CC. Residues 394–423 (RKRKTVTWPEEGKLREYFYFELDETERVNV) carry the PP1-binding motif motif. T398 bears the Phosphothreonine mark. Residues 418 to 619 (TERVNVNKIK…LKQMLVPHGL (202 aa)) form an interaction with WDR82 region. Residues 540-551 (GGSGGSPDGAGG) show a composition bias toward gly residues. 2 positions are modified to phosphoserine: S545 and S591. Residues 583–595 (EILTSIMGSPNSH) are compositionally biased toward polar residues. The segment covering 596 to 611 (PSEELLKQPDYSDKLK) has biased composition (basic and acidic residues). Over residues 644–655 (PPGPGGPMPGPH) the composition is skewed to pro residues. Residue R665 is modified to Omega-N-methylarginine. The span at 674 to 690 (RGGDPFWDGPGDPMRGG) shows a compositional bias: low complexity. Omega-N-methylarginine occurs at positions 693 and 737. 2 stretches are compositionally biased toward gly residues: residues 724 to 762 (ARGG…GSMG) and 784 to 794 (GPGGNMGGSGG). Basic and acidic residues predominate over residues 811–851 (PHDVPSHRGHDHRGPPPHEHRGHDGHGGGGHRGHDGGHSHG). The segment at 854-882 (MSNRPVCRHFMMKGNCRYENNCAFYHPGV) adopts a C3H1-type zinc-finger fold.

As to quaternary structure, component of the PNUTS-PP1 complex (also named PTW/PP1 complex), composed of PPP1R10/PNUTS, TOX4, WDR82, and PPP1CA (or PPP1CB or PPP1CC). Post-translationally, phosphorylated on Ser-398 by PKA within the region necessary for interaction with PPP1CA.

It is found in the nucleus. It localises to the chromosome. In terms of biological role, substrate-recognition component of the PNUTS-PP1 protein phosphatase complex, a protein phosphatase 1 (PP1) complex that promotes RNA polymerase II transcription pause-release, allowing transcription elongation. Promoter-proximal pausing by RNA polymerase II is a transcription halt following transcription initiation but prior to elongation, which acts as a checkpoint to control that transcripts are favorably configured for transcriptional elongation. The PNUTS-PP1 complex mediates the release of RNA polymerase II from promoter-proximal region of genes by catalyzing dephosphorylation of proteins involved in transcription, such as AFF4, CDK9, MEPCE, INTS12, NCBP1, POLR2M/GDOWN1 and SUPT6H. The PNUTS-PP1 complex also regulates RNA polymerase II transcription termination by mediating dephosphorylation of SUPT5H in termination zones downstream of poly(A) sites, thereby promoting deceleration of RNA polymerase II transcription. PNUTS-PP1 complex is also involved in the response to replication stress by mediating dephosphorylation of POLR2A at 'Ser-5' of the CTD, promoting RNA polymerase II degradation. The PNUTS-PP1 complex also plays a role in the control of chromatin structure and cell cycle progression during the transition from mitosis into interphase. PNUTS-PP1 complex mediates dephosphorylation of MYC, promoting MYC stability by preventing MYC ubiquitination by the SCF(FBXW7) complex. In addition to acts as a substrate-recognition component, PPP1R10/PNUTS also acts as a nuclear targeting subunit for the PNUTS-PP1 complex. In some context, PPP1R10/PNUTS also acts as an inhibitor of protein phosphatase 1 (PP1) activity by preventing access to substrates, such as RB. This is Serine/threonine-protein phosphatase 1 regulatory subunit 10 from Mus musculus (Mouse).